Reading from the N-terminus, the 174-residue chain is Anthrone oxygenase CPUR_05435 (174 aa).

The next 4 membrane-spanning stretches (helical) occupy residues 13-33, 56-76, 88-108, and 140-160; these read VALA…AIMI, YGSV…GFAS, CLAA…AMIP, and WVVL…MGFT.

The protein belongs to the anthrone oxygenase family.

It is found in the membrane. The enzyme catalyses emodin anthrone + O2 = emodin + H2O + H(+). Anthrone oxygenase; part of the ergochrome gene cluster responsible for the typical purple-black color of the ergot sclerotia. The ergochrome gene cluster produces several ergot pigments including the yellow ergochrome secalonic acid and its derivatives, as well as the red anthraquinones endocrocin and clavorubin. The pathway begins with the synthesis of atrochrysone thioester by the polyketide synthase (PKS) CPUR_05437. The atrochrysone carboxyl ACP thioesterase CPUR_05436 then breaks the thioester bond and releases the atrochrysone carboxylic acid from CPUR_05437. The decarboxylase CPUR_05434 then catalyzes the concerted decarboxylation-elimination required to convert atochrysone carboxylic acid into emodin anthrone, which is further oxidized to emodin by the anthrone oxygenase CPUR_05435. Emodin is further modified to yield monodictyphenone via several steps involving CPUR_05427, CPUR_05428, CPUR_05429 and CPUR_05430. The short chain dehydrogenase/reductase CPUR_05418 then catalyzes the C-5 ketoreduction to give the xanthone skeleton of the monomeric units. Ergochromes formation requires further dimerization steps of different xanthone units, probably catalyzed by the cytochrome P450 monooxygenase CPUR_05419. CPUR_05425, CPUR_05426 and CPUR_05431 are unique to Claviceps, thus it is likely that they are involved in further modification of xanthone units or in their dimerization. The yellow ergochromes and the red anthraquinone pigments endocrocin and clavorubin are products from the same PKS derived precursors and the latter are likely shunt products in the pathway of xanthone biosynthesis. It is proposed that atrochrysone carboxylic acid released from the PKS CPUR_05437 can also be converted to endocrocin anthrone which is further oxidized into endocrocin by CPUR_05435. Endocrocin could be then modified to clavorubin, possibly by CPUR_05423 and CPUR_05431. Clavorubin is the principal anthraquinone metabolite produced by the cluster with a much higher yield compared to endocrocin. The protein is Anthrone oxygenase CPUR_05435 of Claviceps purpurea (strain 20.1) (Ergot fungus).